Here is a 136-residue protein sequence, read N- to C-terminus: Protein Tat (136 aa).

The interval 22 to 37 (CTNCYCKKCCFHCPVC) is cysteine-rich. A core region spans residues 38–48 (FTKKALGISYG). A compositionally biased stretch (basic residues) spans 48-57 (GRKRRGRKSA). Positions 48-136 (GRKRRGRKSA…SGSSGSACKH (89 aa)) are disordered. Positions 49–55 (RKRRGRK) match the Nuclear localization signal, and RNA-binding (TAR) motif. Polar residues predominate over residues 58–73 (VHSTNNQDPVRQQSLP). The span at 104–120 (SSVSSGRTSGTSSSGYT) shows a compositional bias: low complexity. Polar residues predominate over residues 123–136 (FKTSSGSSGSACKH).

Belongs to the lentiviruses Tat family. Interacts with host CCNT1. Associates with the P-TEFb complex composed at least of Tat, P-TEFb (CDK9 and CCNT1), TAR RNA, RNA Pol II. Interacts with CCNT2; the resulting complex is unable to bind to TAR RNA.

The protein resides in the host nucleus. The protein localises to the host nucleolus. Transcriptional activator that increases RNA Pol II processivity, thereby increasing the level of full-length viral transcripts. Recognizes a hairpin structure at the 5'-LTR of the nascent viral mRNAs referred to as the transactivation responsive RNA element (TAR) and recruits the cyclin T1-CDK9 complex (P-TEFb complex) that will in turn hyperphosphorylate the RNA polymerase II to allow efficient elongation. The CDK9 component of P-TEFb and other Tat-activated kinases hyperphosphorylate the C-terminus of RNA Pol II that becomes stabilized and much more processive. Functionally, extracellular circulating Tat can be endocytosed by surrounding uninfected cells via the binding to several surface receptors. Endosomal low pH allows Tat to cross the endosome membrane to enter the cytosol and eventually further translocate into the nucleus, thereby inducing severe cell dysfunctions ranging from cell activation to cell death. Through. This Simian immunodeficiency virus (isolate TAN1) (SIV-cpz) protein is Protein Tat.